The primary structure comprises 254 residues: 5'-nucleotidase SurE (254 aa).

The a divalent metal cation site is built by Asp-8, Asp-9, Ser-38, and Asn-91.

This sequence belongs to the SurE nucleotidase family. The cofactor is a divalent metal cation.

The protein resides in the cytoplasm. The enzyme catalyses a ribonucleoside 5'-phosphate + H2O = a ribonucleoside + phosphate. Nucleotidase that shows phosphatase activity on nucleoside 5'-monophosphates. The polypeptide is 5'-nucleotidase SurE (Anaeromyxobacter sp. (strain K)).